A 316-amino-acid chain; its full sequence is MRTIKIGSRASQLALVQAEIIINMLKEKFPQYTYEIIKITTLGDRILDKTLDKIGGKGLFVKEIQKALAEEKIDLAIHSMKDMPGETPEELVLGAITKREDPRDVLITRENKSLEELPKGAVIGSSSLRRQAQVMALRGDIKVVPIRGNVGTRLGKIETESLDGVILAAAGLNRLGLKEKISSYLEIEDFTPAVGQGALGCEARRKDIEMLEMLLAINHEETYRCVMAERAFLKLLEGGCHVPIGAYGQQQGQELHMTGMVASSDGRRVIKEQVMGDIADFQALGIQLGETLIEKGAKEILETVNTDNRIVNTEGS.

At C240 the chain carries S-(dipyrrolylmethanemethyl)cysteine.

Belongs to the HMBS family. Monomer. The cofactor is dipyrromethane.

It catalyses the reaction 4 porphobilinogen + H2O = hydroxymethylbilane + 4 NH4(+). The protein operates within porphyrin-containing compound metabolism; protoporphyrin-IX biosynthesis; coproporphyrinogen-III from 5-aminolevulinate: step 2/4. In terms of biological role, tetrapolymerization of the monopyrrole PBG into the hydroxymethylbilane pre-uroporphyrinogen in several discrete steps. The protein is Porphobilinogen deaminase of Alkaliphilus metalliredigens (strain QYMF).